A 573-amino-acid polypeptide reads, in one-letter code: FAD-dependent monooxygenase resA (573 aa).

An N-terminal signal peptide occupies residues 1–17 (MYDVIVIGAGWCGLVAA). Position 106 (Ile106) interacts with FAD. Asn235 carries an N-linked (GlcNAc...) asparagine glycan.

It belongs to the FAD-binding monooxygenase family. It depends on FAD as a cofactor.

It participates in antifungal biosynthesis. Functionally, FAD-dependent monooxygenase; part of the gene cluster that mediates the biosynthesis of the tetrahydropyranyl antifungal agent restricticin that acts as an inhibitor of CYP51 and blocks the ergosterol biosynthesis. The highly reducing polyketide synthase resH, the short chain dehydrogenase resG, the cyclase resF, the FAD-dependent monooxygenase resA and the enoylreductase resD are required to generate the first stable intermediate desmethylrestrictinol. ResH with resD biosynthesize the first polyketide chain intermediate that is reduced by resG, followed by epoxidation by resA before 6-endo cyclization via epoxide opening by resF leads to desmethylrestrictinol. The methyltransferase resE then catalyzes the C4 O-methylation of desmethylrestrictinol to produce restrictinol, and the nonribosomal peptide synthetase resC catalyzes the C3 esterification of restrictinol with glycine that leads to restricticin. In Aspergillus sclerotiorum, this protein is FAD-dependent monooxygenase resA.